The following is a 736-amino-acid chain: MRCRSAAMWIFLALRTALGSVEVRWCTASEPEQQKCEDMSQAFREAGLQPALLCVQGTSADHCVQLIAAHEADAITLDGGAIYEAGKEHGLKPVVGEVYDQEVGTSYYAVAVVKRSSNVTINTLRGVKSCHTGINRTVGWNVPVGYLVDSGRLSVMGCDVLKAVSEYFGGSCVPGAGETRYSESLCRLCRGDTSGEGVCDKSPLERYYDYSGAFRCLAEGAGDVAFVKHSTVLENTDGRTLPSWGHMLMSRDFELLCRDGSRASVTEWQHCHLARVPAHAVVVRADTDAGLIFRLLNEGQRLFSHEGSSFQMFSSEAYGQKNLLFKDSTLELVPIATQTYEAWLGPEYLHAMKGLLCDPNRLPPYLRWCVLSTPEIQKCGDMAVAFSRQRLKPEIQCVSAESPQHCMEQIQAGHIDAVTLNGEDIHTAGKTYGLIPAAGELYAADDRSNSYFVVAVVKRDSAYAFTVDELRGKRSCHPGFGSPAGWDVPVGALIHWGYIRPRNCDVLTAVGQFFNASCVPVNNPKKYPSSLCALCVGDEQGRNKCTGNSQERYYGDSGAFRCLVEGAGDVAFVKHTTIFDNTNGHNPEPWAAHLRSQDYELLCPNGARAEAHQFAACNLAQIPSHAVMVRPDTNIFTVYGLLDKAQDLFGDDHNKNGFKMFDSSSYHGRDLLFKDATVRAVPVGERTTYQDWLGPDYVAALEGMQSQRCSGAAVGAPGASLLPLLPLAVGLLLSSL.

The signal sequence occupies residues 1-19; sequence MRCRSAAMWIFLALRTALG. 2 consecutive Transferrin-like domains span residues 23–357 and 366–706; these read VRWC…GLLC and LRWC…GMQS. Cystine bridges form between cysteine 26–cysteine 63 and cysteine 36–cysteine 54. Residues aspartate 78 and tyrosine 107 each coordinate Fe(3+). Asparagine 118 carries N-linked (GlcNAc...) asparagine glycosylation. 4 disulfides stabilise this stretch: cysteine 130–cysteine 216, cysteine 172–cysteine 189, cysteine 186–cysteine 199, and cysteine 257–cysteine 271. Threonine 132 lines the hydrogencarbonate pocket. Asparagine 135 carries an N-linked (GlcNAc...) asparagine glycan. Positions 136, 138, and 139 each coordinate hydrogencarbonate. Tyrosine 210 contacts Fe(3+). Residues histidine 279 and tyrosine 451 each contribute to the Fe(3+) site. Asparagine 515 is a glycosylation site (N-linked (GlcNAc...) asparagine). Histidine 625 lines the Fe(3+) pocket. Glycine 711 carries GPI-anchor amidated glycine lipidation. Residues 712 to 736 constitute a propeptide, removed in mature form; sequence AAVGAPGASLLPLLPLAVGLLLSSL.

Belongs to the transferrin family.

The protein localises to the cell membrane. Functionally, involved in iron cellular uptake. Seems to be internalized and then recycled back to the cell membrane. Binds a single atom of iron per subunit. Could also bind zinc. The protein is Melanotransferrin of Oryctolagus cuniculus (Rabbit).